The following is a 97-amino-acid chain: Class II hydrophobin A (97 aa).

A signal peptide spans 1-15 (MKSVVFASLIASALA). 3 disulfides stabilise this stretch: Cys30–Cys79, Cys40–Cys53, and Cys80–Cys91.

The protein belongs to the cerato-ulmin hydrophobin family.

It localises to the secreted. It is found in the cell wall. Its subcellular location is the vacuole. The protein resides in the cytoplasmic vesicle. In terms of biological role, aerial growth, conidiation, and dispersal of filamentous fungi in the environment rely upon a capability of their secreting small amphipathic proteins called hydrophobins (HPBs) with low sequence identity. Class I can self-assemble into an outermost layer of rodlet bundles on aerial cell surfaces, conferring cellular hydrophobicity that supports fungal growth, development and dispersal; whereas Class II form highly ordered films at water-air interfaces through intermolecular interactions but contribute nothing to the rodlet structure. Hyd2A contributes to certain cell wall-related features, such as hydrophobicity but is not involved in cell wall-related events during fungal proliferation in host hemocoel. Does not contribute to conidial hydrophobicity. Involved in insect hemocoel colonization independent of cell hydrophobicity, as well as in the asexual development. The sequence is that of Class II hydrophobin A from Beauveria bassiana (strain ARSEF 2860) (White muscardine disease fungus).